We begin with the raw amino-acid sequence, 473 residues long: Photosystem II CP43 reaction center protein (473 aa).

Residues 1-14 constitute a propeptide that is removed on maturation; that stretch reads MKTLYSLRRFYHVE. T15 is modified (N-acetylthreonine). Position 15 is a phosphothreonine (T15). Transmembrane regions (helical) follow at residues 69 to 93, 134 to 155, 178 to 200, 255 to 275, and 291 to 312; these read LFEV…PHLA, LLGP…KDRN, KALY…RKIT, KPFA…LSYS, and WFNN…ASQA. A [CaMn4O5] cluster-binding site is contributed by E367. A helical transmembrane segment spans residues 447 to 471; sequence RARAAAAGFEKGIDRDFEPVLSMTP.

The protein belongs to the PsbB/PsbC family. PsbC subfamily. As to quaternary structure, PSII is composed of 1 copy each of membrane proteins PsbA, PsbB, PsbC, PsbD, PsbE, PsbF, PsbH, PsbI, PsbJ, PsbK, PsbL, PsbM, PsbT, PsbX, PsbY, PsbZ, Psb30/Ycf12, at least 3 peripheral proteins of the oxygen-evolving complex and a large number of cofactors. It forms dimeric complexes. It depends on Binds multiple chlorophylls and provides some of the ligands for the Ca-4Mn-5O cluster of the oxygen-evolving complex. It may also provide a ligand for a Cl- that is required for oxygen evolution. PSII binds additional chlorophylls, carotenoids and specific lipids. as a cofactor.

It is found in the plastid. It localises to the chloroplast thylakoid membrane. Its function is as follows. One of the components of the core complex of photosystem II (PSII). It binds chlorophyll and helps catalyze the primary light-induced photochemical processes of PSII. PSII is a light-driven water:plastoquinone oxidoreductase, using light energy to abstract electrons from H(2)O, generating O(2) and a proton gradient subsequently used for ATP formation. The polypeptide is Photosystem II CP43 reaction center protein (Atropa belladonna (Belladonna)).